A 327-amino-acid polypeptide reads, in one-letter code: G protein pathway suppressor 2 (327 aa).

Residues 14–109 (MARALHRHIM…RRRKEQSDLT (96 aa)) are a coiled coil. Residues 26–65 (RERKRQEEEEVDKMMEQKMKEEQERRKKKEMEERMSLEET) are disordered. Glycyl lysine isopeptide (Lys-Gly) (interchain with G-Cter in SUMO1) cross-links involve residues Lys-45 and Lys-71. Positions 61 to 94 (SLEETKEQILKLQEKLSALQEEKHQLFLQLKKVL) are interaction with SUMO. 3 disordered regions span residues 178-208 (GQFQ…SPSQ), 253-285 (QKQM…APGL), and 300-327 (KSGF…FYHK). Over residues 253–271 (QKQMEHANQQTSFSDSSSL) the composition is skewed to polar residues. The residue at position 312 (Arg-312) is an Asymmetric dimethylarginine. The segment covering 317-327 (QHSQNPRFYHK) has biased composition (polar residues). Residue Arg-323 is modified to Asymmetric dimethylarginine; alternate. Arg-323 carries the omega-N-methylarginine; alternate modification.

In terms of assembly, component of the N-Cor repressor complex, at least composed of NCOR1, NCOR2, HDAC3, TBL1X, TBL1R, CORO2A and GPS2. Interacts (when sumoylated at Lys-71) with TBL1X; leading to protect GPS2 from degradation by the proteasome. Interacts with UBE2N; leading to inhibit UBE2N/Ubc13 activity. Interacts with TRAF1. Interacts with TRAF2. Interacts with TRAF6. Interacts with PPARG (when in the liganded conformation). Interacts with (sumoylated) NR1H2; interaction with sumoylated NR1H2 and NR5A2 onto hepatic acute phase protein promoters prevents N-Cor corepressor complex dissociation. Interacts with (sumoylated) NR5A2; interaction with sumoylated NR1H2 and NR5A2 onto hepatic acute phase protein promoters prevents N-Cor corepressor complex dissociation. Interacts with NR1H3. Interacts with RFX4. Interacts with ANKRD26. Sumoylation regulates its subcellular location. Sumoylation at Lys-45 and Lys-71 regulates the shuttling between the cytoplasm and the nucleus. Sumoylation at Lys-71 is required for interaction with TBL1X. Sumoylated at Lys-45 and Lys-71 in mitochondrion. Desumoylation by SENP1 leads to relocation from the mitochondria to the nucleus. In terms of processing, ubiquitinated at the C-terminus by SIAH2; leading to its degradation by the proteasome. Interaction with TBL1X and methylation at Arg-323 protect GPS2 against ubiquitination and degradation. Post-translationally, methylated at Arg-312 and Arg-323 by PRMT6. Methylation at Arg-323 protects from degradation by the proteasome.

It is found in the nucleus. Its subcellular location is the mitochondrion. The protein localises to the cytoplasm. It localises to the cytosol. Functionally, key regulator of inflammation, lipid metabolism and mitochondrion homeostasis that acts by inhibiting the activity of the ubiquitin-conjugating enzyme UBE2N/Ubc13, thereby inhibiting 'Lys-63'-linked ubiquitination. In the nucleus, can both acts as a corepressor and coactivator of transcription, depending on the context. Acts as a transcription coactivator in adipocytes by promoting the recruitment of PPARG to promoters: acts by inhibiting the activity of the ubiquitin-conjugating enzyme UBE2N/Ubc13, leading to stabilization of KDM4A and subsequent histone H3 'Lys-9' (H3K9) demethylation. Promotes cholesterol efflux by acting as a transcription coactivator. Acts as a regulator of B-cell development by inhibiting UBE2N/Ubc13, thereby restricting the activation of Toll-like receptors (TLRs) and B-cell antigen receptors (BCRs) signaling pathways. Acts as a key mediator of mitochondrial stress response: in response to mitochondrial depolarization, relocates from the mitochondria to the nucleus following desumoylation and specifically promotes expression of nuclear-encoded mitochondrial genes. Promotes transcription of nuclear-encoded mitochondrial genes by inhibiting UBE2N/Ubc13. Can also act as a corepressor as part of the N-Cor repressor complex by repressing active PPARG. Plays an anti-inflammatory role in macrophages and is required for insulin sensitivity by acting as a corepressor. Plays an anti-inflammatory role during the hepatic acute phase response by interacting with sumoylated NR1H2 and NR5A2 proteins, thereby preventing N-Cor corepressor complex dissociation. In the cytosol, also plays a non-transcriptional role by regulating insulin signaling and pro-inflammatory pathways. In the cytoplasm, acts as a negative regulator of inflammation by inhibiting the pro-inflammatory TNF-alpha pathway; acts by repressing UBE2N/Ubc13 activity. In the cytoplasm of adipocytes, restricts the activation of insulin signaling via inhibition of UBE2N/Ubc13-mediated ubiquitination of AKT. Able to suppress G-protein- and mitogen-activated protein kinase-mediated signal transduction. This Mus musculus (Mouse) protein is G protein pathway suppressor 2.